The following is a 300-amino-acid chain: UDP-3-O-acyl-N-acetylglucosamine deacetylase (300 aa).

Zn(2+) contacts are provided by His-76, His-235, and Asp-239. The active-site Proton donor is His-262.

The protein belongs to the LpxC family. It depends on Zn(2+) as a cofactor.

It catalyses the reaction a UDP-3-O-[(3R)-3-hydroxyacyl]-N-acetyl-alpha-D-glucosamine + H2O = a UDP-3-O-[(3R)-3-hydroxyacyl]-alpha-D-glucosamine + acetate. The protein operates within glycolipid biosynthesis; lipid IV(A) biosynthesis; lipid IV(A) from (3R)-3-hydroxytetradecanoyl-[acyl-carrier-protein] and UDP-N-acetyl-alpha-D-glucosamine: step 2/6. In terms of biological role, catalyzes the hydrolysis of UDP-3-O-myristoyl-N-acetylglucosamine to form UDP-3-O-myristoylglucosamine and acetate, the committed step in lipid A biosynthesis. The protein is UDP-3-O-acyl-N-acetylglucosamine deacetylase of Halorhodospira halophila (strain DSM 244 / SL1) (Ectothiorhodospira halophila (strain DSM 244 / SL1)).